The chain runs to 409 residues: Na(+)/H(+) antiporter NhaA 2 (409 aa).

The next 12 membrane-spanning stretches (helical) occupy residues valine 10–alanine 30, glycine 60–glycine 80, leucine 89–isoleucine 109, glycine 118–glycine 138, phenylalanine 148–phenylalanine 168, glycine 171–glycine 191, isoleucine 203–serine 223, glycine 224–leucine 244, isoleucine 257–alanine 277, phenylalanine 283–leucine 303, leucine 328–leucine 348, and threonine 356–isoleucine 376. The disordered stretch occupies residues alanine 384–alanine 409.

The protein belongs to the NhaA Na(+)/H(+) (TC 2.A.33) antiporter family.

The protein resides in the cell membrane. It catalyses the reaction Na(+)(in) + 2 H(+)(out) = Na(+)(out) + 2 H(+)(in). Its function is as follows. Na(+)/H(+) antiporter that extrudes sodium in exchange for external protons. This is Na(+)/H(+) antiporter NhaA 2 from Clavibacter michiganensis subsp. michiganensis (strain NCPPB 382).